A 408-amino-acid polypeptide reads, in one-letter code: Histidine--tRNA ligase (408 aa).

The protein belongs to the class-II aminoacyl-tRNA synthetase family. As to quaternary structure, homodimer.

Its subcellular location is the cytoplasm. The enzyme catalyses tRNA(His) + L-histidine + ATP = L-histidyl-tRNA(His) + AMP + diphosphate + H(+). The polypeptide is Histidine--tRNA ligase (Campylobacter jejuni subsp. jejuni serotype O:6 (strain 81116 / NCTC 11828)).